The primary structure comprises 70 residues: Small ribosomal subunit protein bS21 (70 aa).

The protein belongs to the bacterial ribosomal protein bS21 family.

This Paracidovorax citrulli (strain AAC00-1) (Acidovorax citrulli) protein is Small ribosomal subunit protein bS21.